The sequence spans 356 residues: 3-isopropylmalate dehydrogenase (356 aa).

The substrate site is built by Arg95, Arg105, Arg133, and Asp223. Residues Asp223, Asp247, and Asp251 each contribute to the Mg(2+) site. Gly281–Asn293 is a binding site for NAD(+).

This sequence belongs to the isocitrate and isopropylmalate dehydrogenases family. LeuB type 1 subfamily. In terms of assembly, homodimer. Requires Mg(2+) as cofactor. Mn(2+) serves as cofactor.

The protein resides in the cytoplasm. The enzyme catalyses (2R,3S)-3-isopropylmalate + NAD(+) = 4-methyl-2-oxopentanoate + CO2 + NADH. Its pathway is amino-acid biosynthesis; L-leucine biosynthesis; L-leucine from 3-methyl-2-oxobutanoate: step 3/4. In terms of biological role, catalyzes the oxidation of 3-carboxy-2-hydroxy-4-methylpentanoate (3-isopropylmalate) to 3-carboxy-4-methyl-2-oxopentanoate. The product decarboxylates to 4-methyl-2 oxopentanoate. The chain is 3-isopropylmalate dehydrogenase from Neisseria meningitidis serogroup B (strain ATCC BAA-335 / MC58).